We begin with the raw amino-acid sequence, 108 residues long: DNA-binding protein HBbu (108 aa).

The protein belongs to the bacterial histone-like protein family.

In terms of biological role, histone-like DNA-binding protein which is capable of wrapping DNA to stabilize it, and thus to prevent its denaturation under extreme environmental conditions. The protein is DNA-binding protein HBbu (hbb) of Borrelia parkeri.